Consider the following 216-residue polypeptide: 1-Cys peroxiredoxin PER1 (216 aa).

Residues 4 to 159 (ITLGDTVPNL…VLRALDSLLM (156 aa)) form the Thioredoxin domain. Cysteine 46 acts as the Cysteine sulfenic acid (-SOH) intermediate in catalysis. Positions 191–214 (KKMFPQGFKTADLPSKKGYLRHTE) match the Bipartite nuclear localization signal motif.

It belongs to the peroxiredoxin family. Prx6 subfamily. As to expression, predominantly expressed in seed. Expressed in endosperm, embryo and aleurone cells. Also detected in young seedlings, abscission zones, stem branching points.

Its subcellular location is the nucleus. The protein resides in the cytoplasm. It carries out the reaction a hydroperoxide + [thioredoxin]-dithiol = an alcohol + [thioredoxin]-disulfide + H2O. Functionally, thiol-specific peroxidase that catalyzes the reduction of hydrogen peroxide and organic hydroperoxides to water and alcohols, respectively. Seems to contribute to the inhibition of germination during stress. This chain is 1-Cys peroxiredoxin PER1 (PER1), found in Arabidopsis thaliana (Mouse-ear cress).